A 429-amino-acid polypeptide reads, in one-letter code: Adenylosuccinate synthetase (429 aa).

GTP-binding positions include 12–18 (GDEGKGK) and 40–42 (GHT). Catalysis depends on aspartate 13, which acts as the Proton acceptor. Mg(2+) is bound by residues aspartate 13 and glycine 40. IMP-binding positions include 13-16 (DEGK), 38-41 (NAGH), threonine 129, arginine 143, glutamine 223, threonine 238, and arginine 302. The active-site Proton donor is the histidine 41. A substrate-binding site is contributed by 298 to 304 (VVTGRKR). Residues arginine 304, 330–332 (KLD), and 412–414 (STS) contribute to the GTP site.

The protein belongs to the adenylosuccinate synthetase family. As to quaternary structure, homodimer. The cofactor is Mg(2+).

It localises to the cytoplasm. It carries out the reaction IMP + L-aspartate + GTP = N(6)-(1,2-dicarboxyethyl)-AMP + GDP + phosphate + 2 H(+). Its pathway is purine metabolism; AMP biosynthesis via de novo pathway; AMP from IMP: step 1/2. Its function is as follows. Plays an important role in the de novo pathway of purine nucleotide biosynthesis. Catalyzes the first committed step in the biosynthesis of AMP from IMP. In Brucella ovis (strain ATCC 25840 / 63/290 / NCTC 10512), this protein is Adenylosuccinate synthetase.